The primary structure comprises 444 residues: ATP-dependent 6-phosphofructokinase 2 (444 aa).

Serine 55 bears the Phosphoserine mark. ATP-binding positions include glycine 86, 149-150 (RG), and 174-177 (GDGT). Aspartate 175 serves as a coordination point for Mg(2+). Substrate is bound by residues 203–205 (TVD), 248–250 (MGR), glutamate 304, and 362–365 (YMIR). The Proton acceptor role is filled by aspartate 205.

The protein belongs to the phosphofructokinase type A (PFKA) family. PPi-dependent PFK group II subfamily. Atypical ATP-dependent clade 'X' sub-subfamily. In terms of assembly, homotetramer. It depends on Mg(2+) as a cofactor. As to expression, mostly expressed in roots and stems.

It localises to the cytoplasm. The enzyme catalyses beta-D-fructose 6-phosphate + ATP = beta-D-fructose 1,6-bisphosphate + ADP + H(+). Its pathway is carbohydrate degradation; glycolysis; D-glyceraldehyde 3-phosphate and glycerone phosphate from D-glucose: step 3/4. With respect to regulation, allosterically activated by AMP. Its function is as follows. Catalyzes the phosphorylation of D-fructose 6-phosphate to fructose 1,6-bisphosphate by ATP, the first committing step of glycolysis. The polypeptide is ATP-dependent 6-phosphofructokinase 2 (Arabidopsis thaliana (Mouse-ear cress)).